A 204-amino-acid polypeptide reads, in one-letter code: Recombination protein RecR (204 aa).

The segment at 58-75 adopts a C4-type zinc-finger fold; it reads CSVCQNITDVGVDPCALC. Residues 83 to 181 form the Toprim domain; it reads SVICVVESPV…HVTKIARGIP (99 aa).

Belongs to the RecR family.

Functionally, may play a role in DNA repair. It seems to be involved in an RecBC-independent recombinational process of DNA repair. It may act with RecF and RecO. The polypeptide is Recombination protein RecR (Pelodictyon phaeoclathratiforme (strain DSM 5477 / BU-1)).